The primary structure comprises 157 residues: 2-C-methyl-D-erythritol 2,4-cyclodiphosphate synthase (157 aa).

Residues Asp-8 and His-10 each coordinate a divalent metal cation. 4-CDP-2-C-methyl-D-erythritol 2-phosphate contacts are provided by residues 8 to 10 and 34 to 35; these read DVH and HS. Residue His-42 coordinates a divalent metal cation. 4-CDP-2-C-methyl-D-erythritol 2-phosphate contacts are provided by residues 56-58, 61-65, 100-106, 132-135, Phe-139, and Arg-142; these read DIG, FPDTD, AQAPKMA, and TTTE.

The protein belongs to the IspF family. In terms of assembly, homotrimer. A divalent metal cation serves as cofactor.

It carries out the reaction 4-CDP-2-C-methyl-D-erythritol 2-phosphate = 2-C-methyl-D-erythritol 2,4-cyclic diphosphate + CMP. It participates in isoprenoid biosynthesis; isopentenyl diphosphate biosynthesis via DXP pathway; isopentenyl diphosphate from 1-deoxy-D-xylulose 5-phosphate: step 4/6. In terms of biological role, involved in the biosynthesis of isopentenyl diphosphate (IPP) and dimethylallyl diphosphate (DMAPP), two major building blocks of isoprenoid compounds. Catalyzes the conversion of 4-diphosphocytidyl-2-C-methyl-D-erythritol 2-phosphate (CDP-ME2P) to 2-C-methyl-D-erythritol 2,4-cyclodiphosphate (ME-CPP) with a corresponding release of cytidine 5-monophosphate (CMP). The protein is 2-C-methyl-D-erythritol 2,4-cyclodiphosphate synthase of Pseudomonas savastanoi pv. phaseolicola (strain 1448A / Race 6) (Pseudomonas syringae pv. phaseolicola (strain 1448A / Race 6)).